The primary structure comprises 603 residues: Elongation factor 4 (603 aa).

The tr-type G domain occupies D7 to K191. Residues D19 to T24 and N138 to D141 each bind GTP.

It belongs to the TRAFAC class translation factor GTPase superfamily. Classic translation factor GTPase family. LepA subfamily.

It is found in the cell inner membrane. It carries out the reaction GTP + H2O = GDP + phosphate + H(+). Required for accurate and efficient protein synthesis under certain stress conditions. May act as a fidelity factor of the translation reaction, by catalyzing a one-codon backward translocation of tRNAs on improperly translocated ribosomes. Back-translocation proceeds from a post-translocation (POST) complex to a pre-translocation (PRE) complex, thus giving elongation factor G a second chance to translocate the tRNAs correctly. Binds to ribosomes in a GTP-dependent manner. The chain is Elongation factor 4 from Rhodopseudomonas palustris (strain BisA53).